A 400-amino-acid polypeptide reads, in one-letter code: Iron(III) enterobactin esterase (400 aa).

It belongs to the Fes family.

The protein resides in the cytoplasm. The enzyme catalyses Fe(III)-enterobactin + 3 H2O + H(+) = Fe(III)-[N-(2,3-dihydroxybenzoyl)-L-serine] + 2 N-(2,3-dihydroxybenzoyl)-L-serine. The catalysed reaction is Fe(III)-enterobactin + H2O = Fe(III)-[N-(2,3-dihydroxybenzoyl)-L-serine]3 + H(+). It catalyses the reaction Fe(III)-[N-(2,3-dihydroxybenzoyl)-L-serine]3 + H2O + H(+) = Fe(III)-[N-(2,3-dihydroxybenzoyl)-L-serine]2 + N-(2,3-dihydroxybenzoyl)-L-serine. It carries out the reaction Fe(III)-[N-(2,3-dihydroxybenzoyl)-L-serine]2 + H2O + H(+) = Fe(III)-[N-(2,3-dihydroxybenzoyl)-L-serine] + N-(2,3-dihydroxybenzoyl)-L-serine. The enzyme catalyses enterobactin + 3 H2O = 3 N-(2,3-dihydroxybenzoyl)-L-serine + 2 H(+). Its function is as follows. Catalyzes the hydrolysis of ferric enterobactin (Fe-Ent). Is responsible for the release of iron from ferric enterobactin. Also catalyzes the hydrolysis of iron-free enterobactin (Ent). Hydrolyzes ferric monoglucosyl-C-Ent (Fe-MGE) poorly and does not hydrolyze ferric diglucosyl-C-Ent (Fe-DGE) or ferric triglucosyl-C-Ent (Fe-TGE) at all. Also hydrolyzes apo MGE, but catalyzes the hydrolysis of apo DGE very poorly, and does not process apo TGE at all. The catalytic efficiency for processing Fe-Ent is much higher than that for apo Ent, suggesting that Fe-Ent is the physiological substrate. The chain is Iron(III) enterobactin esterase from Escherichia coli O6:H1 (strain CFT073 / ATCC 700928 / UPEC).